A 335-amino-acid polypeptide reads, in one-letter code: ATP-dependent 6-phosphofructokinase (335 aa).

Gly11 contributes to the ATP binding site. Arg21–Arg25 is an ADP binding site. ATP-binding positions include Arg72–Tyr73 and Gly102–Ser105. Asp103 provides a ligand contact to Mg(2+). Thr125–Asp127 contributes to the substrate binding site. Asp127 functions as the Proton acceptor in the catalytic mechanism. Arg154 lines the ADP pocket. Substrate-binding positions include Arg162 and Met169–Arg171. ADP-binding positions include Gly185–Asp187 and Lys213–His215. Residues Glu222, Arg244, and His250–Arg253 contribute to the substrate site.

The protein belongs to the phosphofructokinase type A (PFKA) family. ATP-dependent PFK group I subfamily. Prokaryotic clade 'B1' sub-subfamily. In terms of assembly, homotetramer. It depends on Mg(2+) as a cofactor.

It is found in the cytoplasm. It carries out the reaction beta-D-fructose 6-phosphate + ATP = beta-D-fructose 1,6-bisphosphate + ADP + H(+). Its pathway is carbohydrate degradation; glycolysis; D-glyceraldehyde 3-phosphate and glycerone phosphate from D-glucose: step 3/4. Allosterically activated by ADP and other diphosphonucleosides, and allosterically inhibited by phosphoenolpyruvate. Functionally, catalyzes the phosphorylation of D-fructose 6-phosphate to fructose 1,6-bisphosphate by ATP, the first committing step of glycolysis. The sequence is that of ATP-dependent 6-phosphofructokinase from Streptococcus pneumoniae serotype 19F (strain G54).